Reading from the N-terminus, the 1346-residue chain is Proline-rich protein 36 (1346 aa).

6 disordered regions span residues methionine 1 to isoleucine 403, serine 426 to proline 512, proline 537 to leucine 606, proline 633 to leucine 679, leucine 711 to alanine 1155, and proline 1168 to lysine 1240. Low complexity predominate over residues alanine 10–threonine 26. Pro residues predominate over residues proline 27–threonine 40. 2 stretches are compositionally biased toward low complexity: residues proline 41–arginine 55 and serine 86–serine 97. Over residues serine 137–lysine 152 the composition is skewed to basic and acidic residues. Residues serine 165–alanine 177 are compositionally biased toward low complexity. Residues arginine 191–glutamate 203 are compositionally biased toward pro residues. Residues serine 208–proline 220 show a composition bias toward polar residues. Composition is skewed to low complexity over residues glutamine 235 to serine 255 and alanine 293 to threonine 312. 3 stretches are compositionally biased toward pro residues: residues alanine 329–alanine 343, proline 371–proline 380, and proline 387–valine 397. Residues serine 426 to leucine 464 are compositionally biased toward low complexity. Over residues threonine 494 to proline 506 the composition is skewed to pro residues. Over residues proline 546–proline 558 the composition is skewed to low complexity. The span at leucine 559–alanine 578 shows a compositional bias: pro residues. Residues proline 633–alanine 647 show a composition bias toward polar residues. Positions serine 648 to glutamine 657 are enriched in pro residues. Residues alanine 658–leucine 679 are compositionally biased toward low complexity. Residues threonine 724–proline 733 show a composition bias toward polar residues. 2 stretches are compositionally biased toward pro residues: residues glutamate 781 to alanine 821 and proline 829 to serine 865. The segment covering proline 866–proline 875 has biased composition (low complexity). Composition is skewed to pro residues over residues phenylalanine 887 to alanine 917, leucine 926 to serine 997, and alanine 1004 to alanine 1015. Low complexity-rich tracts occupy residues phenylalanine 1029–leucine 1046, aspartate 1137–alanine 1146, and glycine 1224–proline 1239. The residue at position 1310 (serine 1310) is a Phosphoserine.

The protein is Proline-rich protein 36 of Homo sapiens (Human).